The sequence spans 313 residues: MTQTKLSTQTTTDNNQEDNDVIIEQFLDSIWLEQGLSANTLSAYRLDLQALSQWLVTQKLNWLSVTTLDLHAFLATRLDEGYKATSAARLLSTLRRFFQYLYREKLRQDDPSALLSTPKLPKRLPKDLSEQQVENLLSAPCIDEPIELRDKAMLEVLYACGLRVSELVGLSLSDISLRQGVLRVIGKGDKERLVPLGEEAIYWLEQYLQYGRPALMQGKTDDIVFPSLRGQKMTRQTFWHRIKHYAVIAGIDSEKLSPHVLRHAFATHLLNHGADLRVVQMLLGHSDLSTTQIYTHVATERLKVLHQQHHPRG.

The 86-residue stretch at 17 to 102 (EDNDVIIEQF…TLRRFFQYLY (86 aa)) folds into the Core-binding (CB) domain. The Tyr recombinase domain occupies 123-307 (RLPKDLSEQQ…ATERLKVLHQ (185 aa)). Residues Arg163, Lys187, His259, Arg262, and His285 contribute to the active site. The active-site O-(3'-phospho-DNA)-tyrosine intermediate is the Tyr294.

It belongs to the 'phage' integrase family. XerD subfamily. In terms of assembly, forms a cyclic heterotetrameric complex composed of two molecules of XerC and two molecules of XerD, in which XerC interacts with XerD via its C-terminal region, XerD interacts with XerC via its C-terminal region and so on.

The protein resides in the cytoplasm. With respect to regulation, ftsK may regulate the catalytic switch between XerC and XerD in the heterotetrameric complex during the two steps of the recombination process. Its function is as follows. Site-specific tyrosine recombinase, which acts by catalyzing the cutting and rejoining of the recombining DNA molecules. Binds cooperatively to specific DNA consensus sequences that are separated from XerC binding sites by a short central region, forming the heterotetrameric XerC-XerD complex that recombines DNA substrates. The complex is essential to convert dimers of the bacterial chromosome into monomers to permit their segregation at cell division. It also contributes to the segregational stability of plasmids. In the complex XerD specifically exchanges the bottom DNA strands. The polypeptide is Tyrosine recombinase XerD (Proteus mirabilis).